Here is a 449-residue protein sequence, read N- to C-terminus: Trigger factor (449 aa).

One can recognise a PPIase FKBP-type domain in the interval 173–258 (GDRVTVDFVG…MKKVEWPHLP (86 aa)).

Belongs to the FKBP-type PPIase family. Tig subfamily.

The protein localises to the cytoplasm. It carries out the reaction [protein]-peptidylproline (omega=180) = [protein]-peptidylproline (omega=0). Its function is as follows. Involved in protein export. Acts as a chaperone by maintaining the newly synthesized protein in an open conformation. Functions as a peptidyl-prolyl cis-trans isomerase. This chain is Trigger factor, found in Burkholderia thailandensis (strain ATCC 700388 / DSM 13276 / CCUG 48851 / CIP 106301 / E264).